The following is a 546-amino-acid chain: Sulfite oxidase, mitochondrial (546 aa).

A mitochondrion-targeting transit peptide spans 1–80 (MLPRLYRSVA…YHDHRCRASQ (80 aa)). Positions 83–162 (PRIYSKEDVR…LAEYKIGELN (80 aa)) constitute a Cytochrome b5 heme-binding domain. Residue His-119 coordinates heme b. Ser-124 carries the post-translational modification Phosphoserine. Heme b contacts are provided by His-144, Gln-146, and His-148. Residues 166–175 (RMSPPLEASD) form a hinge region. The segment at 176–402 (PYSNDPMRHP…YSHWQRRDYK (227 aa)) is moco domain. Mo-molybdopterin-binding positions include 216–220 (FTRNH), Cys-265, Asp-323, His-362, Arg-367, and 378–380 (HVK). The homodimerization stretch occupies residues 403-539 (GFSPSVDWDT…RGVLSNAWHR (137 aa)).

Homodimer. Heme b serves as cofactor. Mo-molybdopterin is required as a cofactor.

The protein resides in the mitochondrion intermembrane space. The catalysed reaction is sulfite + O2 + H2O = sulfate + H2O2. It participates in energy metabolism; sulfur metabolism. In terms of biological role, catalyzes the oxidation of sulfite to sulfate, the terminal reaction in the oxidative degradation of sulfur-containing amino acids. The sequence is that of Sulfite oxidase, mitochondrial from Rattus norvegicus (Rat).